The sequence spans 355 residues: Probable butyrate kinase (355 aa).

It belongs to the acetokinase family.

The protein resides in the cytoplasm. It carries out the reaction butanoate + ATP = butanoyl phosphate + ADP. The chain is Probable butyrate kinase from Listeria monocytogenes serotype 4b (strain CLIP80459).